Here is a 299-residue protein sequence, read N- to C-terminus: Regucalcin (299 aa).

Residue Glu-18 participates in a divalent metal cation binding. Positions 101, 103, and 121 each coordinate substrate. An N6-succinyllysine modification is found at Lys-144. A divalent metal cation contacts are provided by Asn-154 and Asp-204. The Proton donor/acceptor role is filled by Asp-204. N6-succinyllysine is present on residues Lys-244 and Lys-253.

Belongs to the SMP-30/CGR1 family. In terms of assembly, monomer. Zn(2+) serves as cofactor. The cofactor is Mn(2+). Requires Ca(2+) as cofactor. It depends on Mg(2+) as a cofactor.

Its subcellular location is the cytoplasm. It carries out the reaction D-glucono-1,5-lactone + H2O = D-gluconate + H(+). It participates in cofactor biosynthesis; L-ascorbate biosynthesis via UDP-alpha-D-glucuronate pathway; L-ascorbate from UDP-alpha-D-glucuronate: step 3/4. Functionally, gluconolactonase with low activity towards other sugar lactones, including gulonolactone and galactonolactone. Catalyzes a key step in ascorbic acid (vitamin C) biosynthesis. Can also hydrolyze diisopropyl phosphorofluoridate and phenylacetate (in vitro). Calcium-binding protein. Modulates Ca(2+) signaling, and Ca(2+)-dependent cellular processes and enzyme activities. This is Regucalcin (RGN) from Oryctolagus cuniculus (Rabbit).